A 118-amino-acid polypeptide reads, in one-letter code: Basic phospholipase A2 PA-11 (118 aa).

7 cysteine pairs are disulfide-bonded: Cys11/Cys71, Cys27/Cys117, Cys29/Cys45, Cys44/Cys98, Cys51/Cys91, Cys60/Cys84, and Cys78/Cys89. Positions 28, 30, and 32 each coordinate Ca(2+). Residue His48 is part of the active site. Asp49 is a Ca(2+) binding site. The active site involves Asp92.

This sequence belongs to the phospholipase A2 family. Group I subfamily. D49 sub-subfamily. It depends on Ca(2+) as a cofactor. Expressed by the venom gland.

The protein localises to the secreted. The catalysed reaction is a 1,2-diacyl-sn-glycero-3-phosphocholine + H2O = a 1-acyl-sn-glycero-3-phosphocholine + a fatty acid + H(+). Its function is as follows. PLA2 catalyzes the calcium-dependent hydrolysis of the 2-acyl groups in 3-sn-phosphoglycerides. This chain is Basic phospholipase A2 PA-11, found in Pseudechis australis (Mulga snake).